The primary structure comprises 434 residues: Methylenetetrahydrofolate--tRNA-(uracil-5-)-methyltransferase TrmFO (434 aa).

Position 10-15 (10-15 (GAGLAG)) interacts with FAD.

The protein belongs to the MnmG family. TrmFO subfamily. The cofactor is FAD.

Its subcellular location is the cytoplasm. The catalysed reaction is uridine(54) in tRNA + (6R)-5,10-methylene-5,6,7,8-tetrahydrofolate + NADH + H(+) = 5-methyluridine(54) in tRNA + (6S)-5,6,7,8-tetrahydrofolate + NAD(+). The enzyme catalyses uridine(54) in tRNA + (6R)-5,10-methylene-5,6,7,8-tetrahydrofolate + NADPH + H(+) = 5-methyluridine(54) in tRNA + (6S)-5,6,7,8-tetrahydrofolate + NADP(+). In terms of biological role, catalyzes the folate-dependent formation of 5-methyl-uridine at position 54 (M-5-U54) in all tRNAs. The protein is Methylenetetrahydrofolate--tRNA-(uracil-5-)-methyltransferase TrmFO of Bacillus cereus (strain Q1).